A 436-amino-acid polypeptide reads, in one-letter code: Enolase 1 (436 aa).

Mg(2+) is bound at residue Ser40. A disulfide bridge links Cys147 with Cys169. Residues Gln164 and Glu208 each contribute to the (2R)-2-phosphoglycerate site. Glu208 serves as the catalytic Proton donor. Residues Asp243, Glu296, and Asp322 each coordinate Mg(2+). A (2R)-2-phosphoglycerate-binding site is contributed by Asp322. Lys347 functions as the Proton acceptor in the catalytic mechanism. Residues Arg376 and Ser377 each contribute to the (2R)-2-phosphoglycerate site.

Belongs to the enolase family. As to quaternary structure, homodimer. Homotetramer. Interacts with methyltransferase METH; the interaction inhibits METH catalytic activity; 2-phosphoglycerate binding to ENO prevents the interaction with METH. Mg(2+) is required as a cofactor.

Its subcellular location is the cytoplasm. The protein resides in the nucleus. The enzyme catalyses (2R)-2-phosphoglycerate = phosphoenolpyruvate + H2O. It participates in carbohydrate degradation; glycolysis; pyruvate from D-glyceraldehyde 3-phosphate: step 4/5. Functionally, glycolytic enzyme that catalyzes the conversion of 2-phosphoglycerate to phosphoenolpyruvate. Inhibits tRNA methyltransferase METH catalytic activity in the absence of 2-phosphoglycerate. This Entamoeba histolytica (strain ATCC 30459 / HM-1:IMSS / ABRM) protein is Enolase 1.